The primary structure comprises 200 residues: NADH-quinone oxidoreductase subunit C (200 aa).

Belongs to the complex I 30 kDa subunit family. As to quaternary structure, NDH-1 is composed of 14 different subunits. Subunits NuoB, C, D, E, F, and G constitute the peripheral sector of the complex.

The protein localises to the cell inner membrane. It catalyses the reaction a quinone + NADH + 5 H(+)(in) = a quinol + NAD(+) + 4 H(+)(out). NDH-1 shuttles electrons from NADH, via FMN and iron-sulfur (Fe-S) centers, to quinones in the respiratory chain. The immediate electron acceptor for the enzyme in this species is believed to be ubiquinone. Couples the redox reaction to proton translocation (for every two electrons transferred, four hydrogen ions are translocated across the cytoplasmic membrane), and thus conserves the redox energy in a proton gradient. The chain is NADH-quinone oxidoreductase subunit C from Rhizobium leguminosarum bv. trifolii (strain WSM2304).